Consider the following 117-residue polypeptide: Hydrogenase maturation factor HypA (117 aa).

Residue histidine 2 participates in Ni(2+) binding. 4 residues coordinate Zn(2+): cysteine 73, cysteine 76, cysteine 92, and cysteine 95.

It belongs to the HypA/HybF family.

Functionally, involved in the maturation of [NiFe] hydrogenases. Required for nickel insertion into the metal center of the hydrogenase. The sequence is that of Hydrogenase maturation factor HypA from Solidesulfovibrio magneticus (strain ATCC 700980 / DSM 13731 / RS-1) (Desulfovibrio magneticus).